We begin with the raw amino-acid sequence, 195 residues long: Protein GrpE (195 aa).

Positions 1–30 (MSEQEKVEQEEISAELETQNEQEKPMEETE) are disordered. The segment covering 10–20 (EEISAELETQN) has biased composition (acidic residues).

This sequence belongs to the GrpE family. Homodimer.

The protein resides in the cytoplasm. Functionally, participates actively in the response to hyperosmotic and heat shock by preventing the aggregation of stress-denatured proteins, in association with DnaK and GrpE. It is the nucleotide exchange factor for DnaK and may function as a thermosensor. Unfolded proteins bind initially to DnaJ; upon interaction with the DnaJ-bound protein, DnaK hydrolyzes its bound ATP, resulting in the formation of a stable complex. GrpE releases ADP from DnaK; ATP binding to DnaK triggers the release of the substrate protein, thus completing the reaction cycle. Several rounds of ATP-dependent interactions between DnaJ, DnaK and GrpE are required for fully efficient folding. This chain is Protein GrpE, found in Histophilus somni (strain 2336) (Haemophilus somnus).